Reading from the N-terminus, the 932-residue chain is PMS1 protein homolog 1 (932 aa).

The segment at 465–493 (TQSENGNKDHIDESGENEEEAGLENSSEI) is disordered. Residues 571–639 (IKKPMSASAL…RYNSQMKRAI (69 aa)) constitute a DNA-binding region (HMG box).

This sequence belongs to the DNA mismatch repair MutL/HexB family. Component of the DNA mismatch repair (MMR) complex composed at least of MSH2, MSH3, MSH6, PMS1 and MLH1. The MutL-beta complex is a heterodimer of PMS1 and MLH1. Interacts with MCM9.

The protein localises to the nucleus. Functionally, probably involved in the repair of mismatches in DNA. In Homo sapiens (Human), this protein is PMS1 protein homolog 1 (PMS1).